Reading from the N-terminus, the 274-residue chain is Exosome complex component RRP40 (274 aa).

The residue at position 2 (Ala2) is an N-acetylalanine. A Glycyl lysine isopeptide (Lys-Gly) (interchain with G-Cter in SUMO2) cross-link involves residue Lys150.

It belongs to the RRP40 family. In terms of assembly, component of the RNA exosome core complex (Exo-9), composed of EXOSC1, EXOSC2, EXOSC3, EXOSC4, EXOSC5, EXOSC6, EXOSC7, EXOSC8 and EXOSC9; within the complex interacts with EXOSC5 and EXOSC9. The catalytically inactive RNA exosome core complex (Exo-9) associates with the catalytic subunit EXOSC10/RRP6. Exo-9 may associate with DIS3 to form the nucleolar exosome complex, or DIS3L to form the cytoplasmic exosome complex. Exo-9 is formed by a hexameric base ring consisting of the heterodimers EXOSC4-EXOSC9, EXOSC5-EXOSC8 and EXOSC6-EXOSC7, and a cap ring consisting of EXOSC1, EXOSC2 and EXOSC3. The RNA exosome complex associates with cofactors C1D/RRP47, MPHOSPH6/MPP6 and MTREX/MTR4. Interacts with MPHOSPH6/MPP6; the interaction is direct. Interacts with GTPBP1. Interacts with ZC3HAV1. Interacts with DDX17 only in the presence of ZC3HAV1 in an RNA-independent manner. Interacts with DHX36; this interaction occurs in a RNase-insensitive manner. Interacts with HBS1L isoform 2.

The protein localises to the cytoplasm. It is found in the nucleus. Its subcellular location is the nucleolus. Functionally, non-catalytic component of the RNA exosome complex which has 3'-&gt;5' exoribonuclease activity and participates in a multitude of cellular RNA processing and degradation events. In the nucleus, the RNA exosome complex is involved in proper maturation of stable RNA species such as rRNA, snRNA and snoRNA, in the elimination of RNA processing by-products and non-coding 'pervasive' transcripts, such as antisense RNA species and promoter-upstream transcripts (PROMPTs), and of mRNAs with processing defects, thereby limiting or excluding their export to the cytoplasm. The RNA exosome may be involved in Ig class switch recombination (CSR) and/or Ig variable region somatic hypermutation (SHM) by targeting AICDA deamination activity to transcribed dsDNA substrates. In the cytoplasm, the RNA exosome complex is involved in general mRNA turnover and specifically degrades inherently unstable mRNAs containing AU-rich elements (AREs) within their 3' untranslated regions, and in RNA surveillance pathways, preventing translation of aberrant mRNAs. It seems to be involved in degradation of histone mRNA. The catalytic inactive RNA exosome core complex of 9 subunits (Exo-9) is proposed to play a pivotal role in the binding and presentation of RNA for ribonucleolysis, and to serve as a scaffold for the association with catalytic subunits and accessory proteins or complexes. EXOSC3 as peripheral part of the Exo-9 complex stabilizes the hexameric ring of RNase PH-domain subunits through contacts with EXOSC9 and EXOSC5. The protein is Exosome complex component RRP40 (Exosc3) of Mus musculus (Mouse).